Consider the following 615-residue polypeptide: MQKTYPLLSQINSPDDLRLLPKDKLQPLCDELRAYLLESVSQTSGHLASGLGVVELTVALHYVYQTPFDQLIWDVGHQAYPHKILTGRRDQMHTIRQKDGLHPFPWREESPFDVLSVGHSSTSISAGLGIAVAAEKENAGRKTVCVIGDGAITAGMAFEAINHAGSIHTDMLVILNDNEMSISENVGALNNHLARLFTGSLYGTLREGGKKLLSGIPSIKEFVRKTEEHVKGFVSPVGTMFETLGFNYIGPIDGHDIEELISTLKNMRNMSGPQFLHIKTKKGKGYTPAEQDPIGFHGVPKFDHTSGKLPQTKSVPTYSNIFGDWLCEMAERDPKIIGITPAMREGSGMVEFSKRFPQQYFDVAIAEQHAVTFGAGLAIAGYKPVVAIYSSFLQRAYDQLIHDVAIQNLPVIFAIDRAGIVGADGQTHQGAFDLSFMRCVPNMTIMCPSDENEMRQMLYTAYTMNSPVAVRYPRGNAQGVELQPMQALEIGKGKVLKQGEKVAILNFGALLNEAKQVAETHNYTLVDMRFAKPLDEALIAELADRHELLVTLEENALQGGAGSAVNEYLQHIGKIKPLLMLGIPDFFIPQATQAESYADLGLDAKGIEQKILSMK.

Thiamine diphosphate contacts are provided by residues His77 and 118 to 120; that span reads GHS. Asp149 lines the Mg(2+) pocket. Thiamine diphosphate-binding positions include 150–151, Asn178, Tyr286, and Glu367; that span reads GA. Asn178 is a binding site for Mg(2+).

It belongs to the transketolase family. DXPS subfamily. In terms of assembly, homodimer. Requires Mg(2+) as cofactor. The cofactor is thiamine diphosphate.

The catalysed reaction is D-glyceraldehyde 3-phosphate + pyruvate + H(+) = 1-deoxy-D-xylulose 5-phosphate + CO2. It participates in metabolic intermediate biosynthesis; 1-deoxy-D-xylulose 5-phosphate biosynthesis; 1-deoxy-D-xylulose 5-phosphate from D-glyceraldehyde 3-phosphate and pyruvate: step 1/1. Catalyzes the acyloin condensation reaction between C atoms 2 and 3 of pyruvate and glyceraldehyde 3-phosphate to yield 1-deoxy-D-xylulose-5-phosphate (DXP). In Glaesserella parasuis serovar 5 (strain SH0165) (Haemophilus parasuis), this protein is 1-deoxy-D-xylulose-5-phosphate synthase.